The chain runs to 412 residues: Glutamate-pyruvate aminotransferase AlaC (412 aa).

At Lys244 the chain carries N6-(pyridoxal phosphate)lysine.

Belongs to the class-I pyridoxal-phosphate-dependent aminotransferase family. As to quaternary structure, homodimer. Pyridoxal 5'-phosphate serves as cofactor.

It is found in the cytoplasm. It carries out the reaction L-alanine + 2-oxoglutarate = pyruvate + L-glutamate. Its pathway is amino-acid biosynthesis; L-alanine biosynthesis. Functionally, involved in the biosynthesis of alanine. Catalyzes the transamination of pyruvate by glutamate, leading to the formation of L-alanine and 2-oxoglutarate. Is also able to catalyze the reverse reaction. The polypeptide is Glutamate-pyruvate aminotransferase AlaC (Escherichia coli (strain K12)).